The primary structure comprises 340 residues: GTP 3',8-cyclase (340 aa).

One can recognise a Radical SAM core domain in the interval 8–230 (KLGRPIRDLR…EQHFEIDPVE (223 aa)). Arg17 lines the GTP pocket. [4Fe-4S] cluster contacts are provided by Cys24 and Cys28. An S-adenosyl-L-methionine-binding site is contributed by Tyr30. Cys31 is a [4Fe-4S] cluster binding site. Residue Arg71 coordinates GTP. Gly75 is a binding site for S-adenosyl-L-methionine. GTP is bound at residue Thr102. Residue Ser126 coordinates S-adenosyl-L-methionine. Residue Lys163 participates in GTP binding. Met197 contributes to the S-adenosyl-L-methionine binding site. Cys261 and Cys264 together coordinate [4Fe-4S] cluster. 266-268 (RAR) contributes to the GTP binding site. Residue Cys278 coordinates [4Fe-4S] cluster.

The protein belongs to the radical SAM superfamily. MoaA family. As to quaternary structure, monomer and homodimer. The cofactor is [4Fe-4S] cluster.

The catalysed reaction is GTP + AH2 + S-adenosyl-L-methionine = (8S)-3',8-cyclo-7,8-dihydroguanosine 5'-triphosphate + 5'-deoxyadenosine + L-methionine + A + H(+). It functions in the pathway cofactor biosynthesis; molybdopterin biosynthesis. Catalyzes the cyclization of GTP to (8S)-3',8-cyclo-7,8-dihydroguanosine 5'-triphosphate. This is GTP 3',8-cyclase from Staphylococcus aureus (strain bovine RF122 / ET3-1).